A 160-amino-acid polypeptide reads, in one-letter code: MSIQKKPDLSDPKLRAKLAQGMGHNYYGEPAWPNDLLYVFPVVILGTIGLVTALAVLDPALVGEPADPFATPLEILPEWYLYPVFQILRILPNKLLGIACQAAIPLGLMLVPFIESVNKFQNPFRRPVATAVFLFGTVVTLWLGAGATFPIDKSLTLGLF.

The next 3 helical transmembrane spans lie at 36 to 56, 95 to 115, and 131 to 151; these read LLYV…ALAV, LLGI…PFIE, and AVFL…TFPI.

This sequence belongs to the cytochrome b family. PetD subfamily. In terms of assembly, the 4 large subunits of the cytochrome b6-f complex are cytochrome b6, subunit IV (17 kDa polypeptide, PetD), cytochrome f and the Rieske protein, while the 4 small subunits are PetG, PetL, PetM and PetN. The complex functions as a dimer.

Its subcellular location is the cellular thylakoid membrane. Functionally, component of the cytochrome b6-f complex, which mediates electron transfer between photosystem II (PSII) and photosystem I (PSI), cyclic electron flow around PSI, and state transitions. This is Cytochrome b6-f complex subunit 4 from Rippkaea orientalis (strain PCC 8801 / RF-1) (Cyanothece sp. (strain PCC 8801)).